A 305-amino-acid chain; its full sequence is Oxygen-dependent coproporphyrinogen-III oxidase (305 aa).

Ser93 lines the substrate pocket. Positions 97 and 107 each coordinate a divalent metal cation. Catalysis depends on His107, which acts as the Proton donor. 109-111 (NVR) contacts substrate. A divalent metal cation-binding residues include His146 and His176. The tract at residues 241-276 (YVEFNLVFDRGTLFGLQSGGRTESILMSLPPQVRWG) is important for dimerization. 259–261 (GGR) lines the substrate pocket.

This sequence belongs to the aerobic coproporphyrinogen-III oxidase family. Homodimer. Requires a divalent metal cation as cofactor.

The protein resides in the cytoplasm. The catalysed reaction is coproporphyrinogen III + O2 + 2 H(+) = protoporphyrinogen IX + 2 CO2 + 2 H2O. Its pathway is porphyrin-containing compound metabolism; protoporphyrin-IX biosynthesis; protoporphyrinogen-IX from coproporphyrinogen-III (O2 route): step 1/1. In terms of biological role, involved in the heme biosynthesis. Catalyzes the aerobic oxidative decarboxylation of propionate groups of rings A and B of coproporphyrinogen-III to yield the vinyl groups in protoporphyrinogen-IX. This chain is Oxygen-dependent coproporphyrinogen-III oxidase, found in Pseudomonas aeruginosa (strain LESB58).